Here is a 391-residue protein sequence, read N- to C-terminus: Histidinol-phosphate aminotransferase (391 aa).

The residue at position 245 (K245) is an N6-(pyridoxal phosphate)lysine.

It belongs to the class-II pyridoxal-phosphate-dependent aminotransferase family. Histidinol-phosphate aminotransferase subfamily. Homodimer. It depends on pyridoxal 5'-phosphate as a cofactor.

The catalysed reaction is L-histidinol phosphate + 2-oxoglutarate = 3-(imidazol-4-yl)-2-oxopropyl phosphate + L-glutamate. The protein operates within amino-acid biosynthesis; L-histidine biosynthesis; L-histidine from 5-phospho-alpha-D-ribose 1-diphosphate: step 7/9. This chain is Histidinol-phosphate aminotransferase, found in Bifidobacterium adolescentis (strain ATCC 15703 / DSM 20083 / NCTC 11814 / E194a).